The primary structure comprises 214 residues: uncharacterized protein (214 aa).

Transmembrane regions (helical) follow at residues 33–53, 104–124, 132–152, 153–173, and 186–206; these read VILF…ILVV, ILGI…SYVL, FIYL…LSAS, GGVL…FGTK, and LLIL…TITF.

It localises to the cell membrane. This is an uncharacterized protein from Methanocaldococcus jannaschii (strain ATCC 43067 / DSM 2661 / JAL-1 / JCM 10045 / NBRC 100440) (Methanococcus jannaschii).